The chain runs to 737 residues: Cellulose synthase-like protein E1 (737 aa).

2 helical membrane passes run 26 to 45 and 58 to 78; these read AVYR…VLYY and AAWL…VIAQ. Catalysis depends on residues aspartate 146 and aspartate 451. 5 helical membrane passes run 528–548, 551–571, 654–674, 683–703, and 716–736; these read LWAA…LGLV, TPLF…VFCV, VIIA…LSQI, WNVF…NMPI, and IPTA…LVPI.

The protein belongs to the glycosyltransferase 2 family. Plant cellulose synthase-like E subfamily.

Its subcellular location is the golgi apparatus membrane. Thought to be a Golgi-localized beta-glycan synthase that polymerize the backbones of noncellulosic polysaccharides (hemicelluloses) of plant cell wall. The chain is Cellulose synthase-like protein E1 (CSLE1) from Oryza sativa subsp. japonica (Rice).